The following is a 431-amino-acid chain: Foot protein 1 variant 2 (431 aa).

The first 20 residues, Met-1–Ala-20, serve as a signal peptide directing secretion. The residue at position 22 (Tyr-22) is a 3',4'-dihydroxyphenylalanine. 4-hydroxyproline is present on Pro-33. An A-1; approximate repeat occupies Val-41–Lys-50. The 13 X 10 AA A-P-P-P-A-W-T-A-W-K stretch occupies residues Val-41 to Lys-270. A 7'-hydroxytryptophan mark is found at Trp-46, Trp-49, Trp-56, and Trp-59. C-linked (Man) hydroxytryptophan glycosylation is found at Trp-46, Trp-49, Trp-56, and Trp-59. An A-2; approximate repeat occupies Ala-51–Lys-60. The B-1 repeat unit spans residues Ala-61–Lys-70. The interval Ala-61 to Arg-310 is 27 X 10 AA A-T-P-K-P-W-T-A-W-K. Pro-65 bears the 4-hydroxyproline mark. C-linked (Man) tryptophan glycosylation is present at Trp-66. Trp-69 is subject to 7'-hydroxytryptophan. C-linked (Man) hydroxytryptophan glycosylation is present at Trp-69. An A-3 repeat occupies Ala-71–Lys-80. Pro-72, Pro-73, and Pro-74 each carry 4-hydroxyproline. A 7'-hydroxytryptophan mark is found at Trp-76 and Trp-79. C-linked (Man) hydroxytryptophan glycosylation is found at Trp-76 and Trp-79. The stretch at Ala-81 to Lys-90 is one B-2 repeat. A 4-hydroxyproline modification is found at Pro-85. A glycan (C-linked (Man) tryptophan) is linked at Trp-86. 7'-hydroxytryptophan is present on Trp-89. A glycan (C-linked (Man) hydroxytryptophan) is linked at Trp-89. An A-4; approximate repeat occupies Ala-91–Lys-100. A 4-hydroxyproline mark is found at Pro-92, Pro-93, and Pro-94. 7'-hydroxytryptophan occurs at positions 96 and 99. 2 C-linked (Man) hydroxytryptophan glycosylation sites follow: Trp-96 and Trp-99. The stretch at Ala-101 to Lys-110 is one B-3 repeat. The residue at position 105 (Pro-105) is a 4-hydroxyproline. C-linked (Man) tryptophan glycosylation is present at Trp-106. Position 109 is a 7'-hydroxytryptophan (Trp-109). A glycan (C-linked (Man) hydroxytryptophan) is linked at Trp-109. One copy of the A-5; approximate repeat lies at Ala-111–Lys-120. 4-hydroxyproline is present on residues Pro-112, Pro-113, and Pro-114. 2 positions are modified to 7'-hydroxytryptophan: Trp-116 and Trp-119. C-linked (Man) hydroxytryptophan glycans are attached at residues Trp-116 and Trp-119. A B-4; approximate repeat occupies Ala-121–Lys-130. Pro-125 bears the 4-hydroxyproline mark. A 7'-hydroxytryptophan modification is found at Trp-129. C-linked (Man) hydroxytryptophan glycosylation occurs at Trp-129. Residues Ala-131–Lys-140 form an A-6; approximate repeat. A 4-hydroxyproline mark is found at Pro-132, Pro-133, and Pro-134. Residues Trp-136 and Trp-139 each carry the 7'-hydroxytryptophan modification. C-linked (Man) hydroxytryptophan glycans are attached at residues Trp-136 and Trp-139. The B-5; approximate repeat unit spans residues Ala-141–Lys-150. 4-hydroxyproline is present on Pro-145. Trp-146 is a glycosylation site (C-linked (Man) tryptophan). Trp-149 is modified (7'-hydroxytryptophan). C-linked (Man) hydroxytryptophan glycosylation occurs at Trp-149. The B-6 repeat unit spans residues Ala-151 to Lys-160. The residue at position 155 (Pro-155) is a 4-hydroxyproline. The C-linked (Man) tryptophan glycan is linked to Trp-156. A 7'-hydroxytryptophan modification is found at Trp-159. A glycan (C-linked (Man) hydroxytryptophan) is linked at Trp-159. Residues Ala-161–Lys-170 form an A-7 repeat. Residues Pro-162, Pro-163, and Pro-164 each carry the 4-hydroxyproline modification. Residues Trp-166 and Trp-169 each carry the 7'-hydroxytryptophan modification. Trp-166 and Trp-169 each carry a C-linked (Man) hydroxytryptophan glycan. Residues Ala-171–Lys-180 form a B-7 repeat. At Pro-175 the chain carries 4-hydroxyproline. Trp-176 is a glycosylation site (C-linked (Man) tryptophan). At Trp-179 the chain carries 7'-hydroxytryptophan. C-linked (Man) hydroxytryptophan glycosylation occurs at Trp-179. One copy of the B-8 repeat lies at Ala-181–Lys-190. The residue at position 185 (Pro-185) is a 4-hydroxyproline. Trp-186 carries a C-linked (Man) tryptophan glycan. Trp-189 is modified (7'-hydroxytryptophan). A glycan (C-linked (Man) hydroxytryptophan) is linked at Trp-189. The B-9 repeat unit spans residues Ala-191–Lys-200. 4-hydroxyproline is present on Pro-195. The C-linked (Man) tryptophan glycan is linked to Trp-196. Trp-199 carries the post-translational modification 7'-hydroxytryptophan. Trp-199 carries a C-linked (Man) hydroxytryptophan glycan. Residues Ala-201–Lys-210 form a B-10; approximate repeat. Pro-205 is modified (4-hydroxyproline). A glycan (C-linked (Man) tryptophan) is linked at Trp-206. Trp-209 bears the 7'-hydroxytryptophan mark. A C-linked (Man) hydroxytryptophan glycan is attached at Trp-209. Residues Ala-211–Lys-220 form a B-11 repeat. Pro-215 carries the 4-hydroxyproline modification. The C-linked (Man) tryptophan glycan is linked to Trp-216. 7'-hydroxytryptophan is present on Trp-219. A glycan (C-linked (Man) hydroxytryptophan) is linked at Trp-219. Residues Ala-221 to Lys-230 form an A-8 repeat. Pro-222, Pro-223, and Pro-224 each carry 4-hydroxyproline. Trp-226 and Trp-229 each carry 7'-hydroxytryptophan. C-linked (Man) hydroxytryptophan glycans are attached at residues Trp-226 and Trp-229. Residues Ala-231–Lys-240 form a B-12 repeat. Residue Pro-235 is modified to 4-hydroxyproline. C-linked (Man) tryptophan glycosylation occurs at Trp-236. At Trp-239 the chain carries 7'-hydroxytryptophan. Trp-239 carries C-linked (Man) hydroxytryptophan glycosylation. The stretch at Ala-241–Lys-250 is one A-9 repeat. 3 positions are modified to 4-hydroxyproline: Pro-242, Pro-243, and Pro-244. Trp-246 and Trp-249 each carry 7'-hydroxytryptophan. 2 C-linked (Man) hydroxytryptophan glycosylation sites follow: Trp-246 and Trp-249. A B-13 repeat occupies Ala-251–Lys-260. 4-hydroxyproline is present on Pro-255. The C-linked (Man) tryptophan glycan is linked to Trp-256. Trp-259 is subject to 7'-hydroxytryptophan. C-linked (Man) hydroxytryptophan glycosylation occurs at Trp-259. The stretch at Ala-261–Lys-270 is one A-10 repeat. 4-hydroxyproline is present on residues Pro-262, Pro-263, and Pro-264. A 7'-hydroxytryptophan mark is found at Trp-266 and Trp-269. Residues Trp-266 and Trp-269 are each glycosylated (C-linked (Man) hydroxytryptophan). Residues Ala-271–Lys-280 form a B-14 repeat. Pro-275 is modified (4-hydroxyproline). Trp-276 carries a C-linked (Man) tryptophan glycan. Trp-279 is subject to 7'-hydroxytryptophan. A C-linked (Man) hydroxytryptophan glycan is attached at Trp-279. A B-15 repeat occupies Ala-281–Lys-290. At Pro-285 the chain carries 4-hydroxyproline. C-linked (Man) tryptophan glycosylation occurs at Trp-286. Trp-289 is subject to 7'-hydroxytryptophan. Trp-289 carries C-linked (Man) hydroxytryptophan glycosylation. Residues Ala-291–Lys-300 form a B-16 repeat. Pro-295 is modified (4-hydroxyproline). Trp-296 carries C-linked (Man) tryptophan glycosylation. Trp-299 carries the 7'-hydroxytryptophan modification. A glycan (C-linked (Man) hydroxytryptophan) is linked at Trp-299. The stretch at Ala-301–Arg-310 is one B-17; approximate repeat. A 4-hydroxyproline modification is found at Pro-305. Trp-306 carries C-linked (Man) tryptophan glycosylation. Position 309 is a 7'-hydroxytryptophan (Trp-309). Trp-309 carries a C-linked (Man) hydroxytryptophan glycan. Positions Gly-322–Gly-377 are disordered. A compositionally biased stretch (gly residues) spans His-323–Gly-332. The Collagen-like domain maps to Gly-329 to Gly-380. Residues Lys-336–Pro-366 show a composition bias toward low complexity. Residues Pro-367, Pro-370, and Pro-376 each carry the 4-hydroxyproline modification.

Produced by the byssal gland.

Its subcellular location is the secreted. Functionally, provides adhesiveness to the mussel's foot. Mussels produce one of the strongest water insoluble glues. The mussel's adhesive is a bundle of threads, called a byssus, formed by a fibrous collagenous core coated with adhesive proteins. This is Foot protein 1 variant 2 from Perna viridis (Asian green mussel).